A 33-amino-acid chain; its full sequence is Cytochrome b6-f complex subunit 7 (33 aa).

A helical membrane pass occupies residues A9 to I29.

It belongs to the PetM family. As to quaternary structure, the 4 large subunits of the cytochrome b6-f complex are cytochrome b6, subunit IV (17 kDa polypeptide, PetD), cytochrome f and the Rieske protein, while the 4 small subunits are PetG, PetL, PetM and PetN. The complex functions as a dimer.

Its subcellular location is the plastid. It is found in the cyanelle thylakoid membrane. Component of the cytochrome b6-f complex, which mediates electron transfer between photosystem II (PSII) and photosystem I (PSI), cyclic electron flow around PSI, and state transitions. This is Cytochrome b6-f complex subunit 7 from Cyanophora paradoxa.